The chain runs to 308 residues: 11-beta-hydroxysteroid dehydrogenase-like 2 (308 aa).

The helical; Signal-anchor for type II membrane protein transmembrane segment at 10 to 30 (FLLPPLTISFLVLFYPFYLFT) threads the bilayer. Residues 53-79 (GASSGIGEHVAYEYAKKGAKLALVARR) and aspartate 104 contribute to the NADP(+) site. Residue serine 183 participates in substrate binding. Tyrosine 196 functions as the Proton acceptor in the catalytic mechanism. Residues 196–200 (YSASK) and lysine 200 contribute to the NADP(+) site.

This sequence belongs to the short-chain dehydrogenases/reductases (SDR) family.

The protein localises to the membrane. The protein is 11-beta-hydroxysteroid dehydrogenase-like 2 (HSD2) of Arabidopsis thaliana (Mouse-ear cress).